Consider the following 183-residue polypeptide: uncharacterized protein (183 aa).

This is an uncharacterized protein from Acanthamoeba polyphaga (Amoeba).